Reading from the N-terminus, the 522-residue chain is Maturase K (522 aa).

Belongs to the intron maturase 2 family. MatK subfamily.

The protein resides in the plastid. Its subcellular location is the chloroplast. In terms of biological role, usually encoded in the trnK tRNA gene intron. Probably assists in splicing its own and other chloroplast group II introns. This is Maturase K from Dianella ensifolia (Flax lily).